The primary structure comprises 443 residues: Ribulose bisphosphate carboxylase large chain (443 aa).

The substrate site is built by Asn-89 and Thr-139. Lys-141 (proton acceptor) is an active-site residue. Substrate is bound at residue Lys-143. Residues Lys-167, Asp-169, and Glu-170 each contribute to the Mg(2+) site. An N6-carboxylysine modification is found at Lys-167. The active-site Proton acceptor is His-260. Positions 261, 293, and 345 each coordinate substrate.

This sequence belongs to the RuBisCO large chain family. Type I subfamily. As to quaternary structure, heterohexadecamer of 8 large chains and 8 small chains; disulfide-linked. The disulfide link is formed within the large subunit homodimers. It depends on Mg(2+) as a cofactor. In terms of processing, the disulfide bond which can form in the large chain dimeric partners within the hexadecamer appears to be associated with oxidative stress and protein turnover.

It localises to the plastid. The protein localises to the chloroplast. It catalyses the reaction 2 (2R)-3-phosphoglycerate + 2 H(+) = D-ribulose 1,5-bisphosphate + CO2 + H2O. The catalysed reaction is D-ribulose 1,5-bisphosphate + O2 = 2-phosphoglycolate + (2R)-3-phosphoglycerate + 2 H(+). Its function is as follows. RuBisCO catalyzes two reactions: the carboxylation of D-ribulose 1,5-bisphosphate, the primary event in carbon dioxide fixation, as well as the oxidative fragmentation of the pentose substrate in the photorespiration process. Both reactions occur simultaneously and in competition at the same active site. The protein is Ribulose bisphosphate carboxylase large chain of Callitriche heterophylla (Large water-starwort).